The following is a 334-amino-acid chain: Histo-blood group ABO system transferase 2 (334 aa).

At 1 to 15 (MKDLRFGRLKCYSLH) the chain is on the cytoplasmic side. A helical; Signal-anchor for type II membrane protein transmembrane segment spans residues 16–36 (LGILPLTVLVLVFFCFVCLSL). The Lumenal segment spans residues 37 to 334 (RSQEWGHPGA…VPKNHQAIRN (298 aa)). A glycan (N-linked (GlcNAc...) asparagine) is linked at asparagine 94. UDP-N-acetyl-alpha-D-galactosamine-binding positions include 102-104 (FAV), tyrosine 107, and 192-194 (DVD). Mn(2+) contacts are provided by aspartate 192 and aspartate 194. The an alpha-L-fucosyl-(1-&gt;2)-beta-D-galactosyl derivative site is built by histidine 214, threonine 226, glutamate 284, and aspartate 307. Glutamate 284 (nucleophile) is an active-site residue.

The protein belongs to the glycosyltransferase 6 family. Mn(2+) serves as cofactor. Large intestine, caecum, stomach, pancreas, submaxillary gland and kidney (at protein level). Ubiquitous.

It localises to the golgi apparatus. Its subcellular location is the golgi stack membrane. The protein localises to the secreted. It carries out the reaction an alpha-L-fucosyl-(1-&gt;2)-beta-D-galactosyl derivative + UDP-N-acetyl-alpha-D-galactosamine = an N-acetyl-alpha-D-galactosaminyl-(1-&gt;3)-[alpha-L-fucosyl-(1-&gt;2)]-beta-D-galactosyl derivative + UDP + H(+). The enzyme catalyses an alpha-L-fucosyl-(1-&gt;2)-beta-D-galactosyl derivative + UDP-alpha-D-galactose = an alpha-D-galactosyl-(1-&gt;3)-[alpha-L-fucosyl-(1-&gt;2)]-beta-D-galactosyl derivative + UDP + H(+). Its pathway is protein modification; protein glycosylation. Possesses strong B transferase activity and weak A transferase activity. The sequence is that of Histo-blood group ABO system transferase 2 (Abo2) from Rattus norvegicus (Rat).